Here is a 192-residue protein sequence, read N- to C-terminus: Large ribosomal subunit protein bL9 (192 aa).

Residues 172 to 192 (DALRPEDFFDPEADGIDEDEA) form a disordered region. A compositionally biased stretch (acidic residues) spans 179–192 (FFDPEADGIDEDEA).

Belongs to the bacterial ribosomal protein bL9 family.

Functionally, binds to the 23S rRNA. The sequence is that of Large ribosomal subunit protein bL9 from Rhizobium etli (strain CIAT 652).